The primary structure comprises 421 residues: Fumarylacetoacetase (421 aa).

Asp-131 is a Ca(2+) binding site. His-138 acts as the Proton acceptor in catalysis. Arg-147 is a substrate binding site. Residues Glu-204, Glu-206, and Asp-238 each contribute to the Ca(2+) site. Asp-238 lines the Mg(2+) pocket. The substrate site is built by Gln-245 and Tyr-249. 2 residues coordinate Mg(2+): Lys-258 and Thr-262. Thr-355 serves as a coordination point for substrate.

This sequence belongs to the FAH family. Requires Ca(2+) as cofactor. Mg(2+) is required as a cofactor.

The catalysed reaction is 4-fumarylacetoacetate + H2O = acetoacetate + fumarate + H(+). It functions in the pathway amino-acid degradation; L-phenylalanine degradation; acetoacetate and fumarate from L-phenylalanine: step 6/6. In terms of biological role, converts fumarylacetoacetate to acetoacetate and fumarate. Involved in tyrosine catabolic pathway. Catalyzes the final step in the tyrosine degradation pathway. This chain is Fumarylacetoacetase, found in Arabidopsis thaliana (Mouse-ear cress).